The chain runs to 463 residues: L-seryl-tRNA(Sec) selenium transferase (463 aa).

Lys295 bears the N6-(pyridoxal phosphate)lysine mark.

Belongs to the SelA family. As to quaternary structure, homodecamer; pentamer of dimers. Binds only one seryl-tRNA(Sec) per dimer. Requires pyridoxal 5'-phosphate as cofactor.

Its subcellular location is the cytoplasm. The enzyme catalyses L-seryl-tRNA(Sec) + selenophosphate + H(+) = L-selenocysteinyl-tRNA(Sec) + phosphate. Its pathway is aminoacyl-tRNA biosynthesis; selenocysteinyl-tRNA(Sec) biosynthesis; selenocysteinyl-tRNA(Sec) from L-seryl-tRNA(Sec) (bacterial route): step 1/1. In terms of biological role, converts seryl-tRNA(Sec) to selenocysteinyl-tRNA(Sec) required for selenoprotein biosynthesis. The sequence is that of L-seryl-tRNA(Sec) selenium transferase from Escherichia coli O6:H1 (strain CFT073 / ATCC 700928 / UPEC).